Consider the following 478-residue polypeptide: Cytochrome c-552 (478 aa).

The signal sequence occupies residues 1-26 (MARKTLRARRFFSLIFPFFFITSVYA). H94 lines the heme c pocket. Heme-binding residues include C122, C125, and K126. Heme c is bound by residues C160, C163, H164, C209, C212, and H213. Residues E215, Y216, K261, and Q263 each contribute to the Ca(2+) site. Y216 contacts substrate. Position 264 (H264) interacts with substrate. Heme c-binding residues include H275, C282, C285, H286, H301, C314, C317, H318, and H393.

This sequence belongs to the cytochrome c-552 family. Ca(2+) is required as a cofactor. The cofactor is heme c.

Its subcellular location is the periplasm. It carries out the reaction 6 Fe(III)-[cytochrome c] + NH4(+) + 2 H2O = 6 Fe(II)-[cytochrome c] + nitrite + 8 H(+). It participates in nitrogen metabolism; nitrate reduction (assimilation). Catalyzes the reduction of nitrite to ammonia, consuming six electrons in the process. The protein is Cytochrome c-552 of Salmonella typhi.